The primary structure comprises 144 residues: Ribosomal RNA large subunit methyltransferase H (144 aa).

S-adenosyl-L-methionine is bound by residues Leu-63, Gly-92, and 111–116 (LSPMTF).

Belongs to the RNA methyltransferase RlmH family. As to quaternary structure, homodimer.

The protein localises to the cytoplasm. It catalyses the reaction pseudouridine(1915) in 23S rRNA + S-adenosyl-L-methionine = N(3)-methylpseudouridine(1915) in 23S rRNA + S-adenosyl-L-homocysteine + H(+). Functionally, specifically methylates the pseudouridine at position 1915 (m3Psi1915) in 23S rRNA. The chain is Ribosomal RNA large subunit methyltransferase H from Synechococcus sp. (strain CC9605).